A 173-amino-acid chain; its full sequence is VQ motif-containing protein 31 (173 aa).

The VQ motif lies at 27-36 (FREIVQRLTG). Residue T46 is modified to Phosphothreonine. Disordered stretches follow at residues 76–105 (EIVKPPLSFKPTGTTPSSKSGNTNLLTSPV) and 143–173 (LHPSPRSKPGYTEPELLTLFPLTSPNSSGKP). The segment covering 86 to 105 (PTGTTPSSKSGNTNLLTSPV) has biased composition (polar residues). Phosphoserine is present on residues S92, S103, S146, and S149. Low complexity predominate over residues 154-165 (TEPELLTLFPLT). A Phosphothreonine modification is found at T165. A phosphoserine mark is found at S166 and S170.

In terms of processing, phosphorylated on serine and threonine residues by MPK6.

The protein resides in the nucleus. In terms of biological role, may modulate WRKY transcription factor activities. This chain is VQ motif-containing protein 31, found in Arabidopsis thaliana (Mouse-ear cress).